A 167-amino-acid polypeptide reads, in one-letter code: KHFSTTAPEKNLPVLLALIGIWYNNFFGAETEAILPYDQYMHRFAAYFQQGNMESNGKYVDRNGNAVDYQTGPIIWGEPGTNGQHAFYQLIHQGTKMVPCDFIAPAITQNPLSDHHPKLLSNFFAQTEALAFGKSREVVEQEYRDQGKDPAALEHVVPFKVFEGNRP.

Catalysis depends on glutamate 54, which acts as the Proton donor. Histidine 85 is a catalytic residue.

This sequence belongs to the GPI family.

It is found in the cytoplasm. It catalyses the reaction alpha-D-glucose 6-phosphate = beta-D-fructose 6-phosphate. Its pathway is carbohydrate biosynthesis; gluconeogenesis. The protein operates within carbohydrate degradation; glycolysis; D-glyceraldehyde 3-phosphate and glycerone phosphate from D-glucose: step 2/4. Its function is as follows. Catalyzes the reversible isomerization of glucose-6-phosphate to fructose-6-phosphate. The chain is Glucose-6-phosphate isomerase from Klebsiella oxytoca.